Consider the following 110-residue polypeptide: Large ribosomal subunit protein uL22 (110 aa).

Belongs to the universal ribosomal protein uL22 family. As to quaternary structure, part of the 50S ribosomal subunit.

This protein binds specifically to 23S rRNA; its binding is stimulated by other ribosomal proteins, e.g. L4, L17, and L20. It is important during the early stages of 50S assembly. It makes multiple contacts with different domains of the 23S rRNA in the assembled 50S subunit and ribosome. In terms of biological role, the globular domain of the protein is located near the polypeptide exit tunnel on the outside of the subunit, while an extended beta-hairpin is found that lines the wall of the exit tunnel in the center of the 70S ribosome. This Haemophilus influenzae (strain 86-028NP) protein is Large ribosomal subunit protein uL22.